We begin with the raw amino-acid sequence, 228 residues long: Thermonuclease (228 aa).

An N-terminal signal peptide occupies residues 1-23 (MTEYLLSAGICMAIVSILLIGMA). The propeptide occupies 24–60 (ISNVSKGQYAKRFFYFATSCLVLTLVVVSSLSSSANA). Residues 58–70 (ANASQTDNGVNRS) show a composition bias toward polar residues. The disordered stretch occupies residues 58–83 (ANASQTDNGVNRSGSEDPTVYSATST). Ca(2+) is bound at residue aspartate 100. Arginine 114 is a catalytic residue. Ca(2+) is bound by residues aspartate 119 and threonine 120. Active-site residues include glutamate 122 and arginine 166.

The protein belongs to the thermonuclease family. It depends on Ca(2+) as a cofactor.

The protein resides in the secreted. It carries out the reaction Endonucleolytic cleavage to nucleoside 3'-phosphates and 3'-phosphooligonucleotide end-products.. Its function is as follows. Enzyme that catalyzes the hydrolysis of both DNA and RNA at the 5' position of the phosphodiester bond. The protein is Thermonuclease (nuc) of Staphylococcus aureus (strain COL).